The chain runs to 162 residues: NADH-quinone oxidoreductase subunit I (162 aa).

4Fe-4S ferredoxin-type domains follow at residues 52–82 (LRRY…IEAG) and 93–122 (VRYD…EGPN). [4Fe-4S] cluster is bound by residues C62, C65, C68, C72, C102, C105, C108, and C112.

This sequence belongs to the complex I 23 kDa subunit family. In terms of assembly, NDH-1 is composed of 14 different subunits. Subunits NuoA, H, J, K, L, M, N constitute the membrane sector of the complex. It depends on [4Fe-4S] cluster as a cofactor.

The protein localises to the cell inner membrane. It carries out the reaction a quinone + NADH + 5 H(+)(in) = a quinol + NAD(+) + 4 H(+)(out). In terms of biological role, NDH-1 shuttles electrons from NADH, via FMN and iron-sulfur (Fe-S) centers, to quinones in the respiratory chain. The immediate electron acceptor for the enzyme in this species is believed to be ubiquinone. Couples the redox reaction to proton translocation (for every two electrons transferred, four hydrogen ions are translocated across the cytoplasmic membrane), and thus conserves the redox energy in a proton gradient. In Bradyrhizobium sp. (strain BTAi1 / ATCC BAA-1182), this protein is NADH-quinone oxidoreductase subunit I.